The sequence spans 425 residues: Glutamate-1-semialdehyde 2,1-aminomutase (425 aa).

An N6-(pyridoxal phosphate)lysine modification is found at Lys265.

The protein belongs to the class-III pyridoxal-phosphate-dependent aminotransferase family. HemL subfamily. As to quaternary structure, homodimer. It depends on pyridoxal 5'-phosphate as a cofactor.

It localises to the cytoplasm. The catalysed reaction is (S)-4-amino-5-oxopentanoate = 5-aminolevulinate. The protein operates within porphyrin-containing compound metabolism; protoporphyrin-IX biosynthesis; 5-aminolevulinate from L-glutamyl-tRNA(Glu): step 2/2. The sequence is that of Glutamate-1-semialdehyde 2,1-aminomutase from Clostridium perfringens (strain 13 / Type A).